The chain runs to 598 residues: Protein VASCULAR ASSOCIATED DEATH 1, chloroplastic (598 aa).

Residues 1–11 (MAMLSTASVSG) are compositionally biased toward polar residues. Positions 1 to 64 (MAMLSTASVS…PSRGGDNQSE (64 aa)) are disordered. The transit peptide at 1 to 68 (MAMLSTASVS…GDNQSEVISK (68 aa)) directs the protein to the chloroplast. Asparagine 61 carries N-linked (GlcNAc...) asparagine glycosylation. Residues 70–134 (EEYRQLFRLP…PFAEISCVKR (65 aa)) enclose the GRAM domain. In terms of domain architecture, VASt spans 272-444 (DFTKVAEAKF…MAHELLKQKK (173 aa)). Asparagine 329 and asparagine 494 each carry an N-linked (GlcNAc...) asparagine glycan. A helical transmembrane segment spans residues 507–527 (QVIVLAFAVILLMQVTIVVLL). Positions 553–595 (WLEKRMHFLREEMMMVEDRLQRMRQDHAALKAQFHHLERLLRR) form a coiled coil.

The protein resides in the membrane. The protein localises to the plastid. It localises to the chloroplast. In terms of biological role, involved in ethylene- and salicylic acid-dependent cell death control associated with cells in the vicinity of vascular bundles. In Arabidopsis thaliana (Mouse-ear cress), this protein is Protein VASCULAR ASSOCIATED DEATH 1, chloroplastic.